The following is a 248-amino-acid chain: NADP-dependent 3-hydroxy acid dehydrogenase YdfG (248 aa).

NADP(+)-binding positions include 7–12 (GATAGF), 32–33 (RR), 54–55 (DV), and asparagine 81. A substrate-binding site is contributed by serine 134. Residues tyrosine 147, lysine 151, and 177–185 (PGLVGGTEF) each bind NADP(+). The active-site Proton acceptor is tyrosine 147.

The protein belongs to the short-chain dehydrogenases/reductases (SDR) family. Homotetramer.

It catalyses the reaction 3-hydroxypropanoate + NADP(+) = 3-oxopropanoate + NADPH + H(+). It carries out the reaction L-allo-threonine + NADP(+) = aminoacetone + CO2 + NADPH. In terms of biological role, NADP-dependent dehydrogenase with broad substrate specificity acting on 3-hydroxy acids. Catalyzes the NADP-dependent oxidation of L-allo-threonine to L-2-amino-3-keto-butyrate, which is spontaneously decarboxylated into aminoacetone. Also acts on D-threonine, L-serine, D-serine, D-3-hydroxyisobutyrate, L-3-hydroxyisobutyrate, D-glycerate and L-glycerate. Able to catalyze the reduction of the malonic semialdehyde to 3-hydroxypropionic acid. YdfG is apparently supplementing RutE, the presumed malonic semialdehyde reductase involved in pyrimidine degradation since both are able to detoxify malonic semialdehyde. The polypeptide is NADP-dependent 3-hydroxy acid dehydrogenase YdfG (Salmonella typhi).